Reading from the N-terminus, the 366-residue chain is uncharacterized protein (366 aa).

The 112-residue stretch at 169-280 (ILDTSVIIDG…LNKVCELQKV (112 aa)) folds into the PINc domain. Asp250 provides a ligand contact to Mg(2+). In terms of domain architecture, TRAM spans 295-356 (VVLPGEEMNV…LQTAAGRMIF (62 aa)).

This sequence belongs to the ycf81 family. In the central section; belongs to the PINc/VapC protein family. It depends on Mg(2+) as a cofactor.

In terms of biological role, an RNase. This is an uncharacterized protein from Bacillus subtilis (strain 168).